A 240-amino-acid chain; its full sequence is MATKIFSLLMLLALSTCVANATIFPQCSQAPIASLLPPYLPSIIASICENPALQPYRLQQAIAASNIPSSPLLFQQSPALSLVQSLVQTIRAQQLQQLVLPLINQVVLANLSPYSQQQQFLPFNQLSTLNPAAYLQQQLLPSSQLATAYCQQQQLLPFNQLAALNPAAYLQQQILLPFSQLAAANRASFLTQQQLLLFYQQFAANPATLLQLQQLLPFVQLALTDPAASYQQHIIGGALF.

A signal peptide spans 1 to 21 (MATKIFSLLMLLALSTCVANA).

It belongs to the zein family.

Its function is as follows. Zeins are major seed storage proteins. The protein is Zein-alpha M6 of Zea mays (Maize).